A 128-amino-acid chain; its full sequence is uncharacterized protein (128 aa).

As to expression, high expression in pituitary gland and weak in pancreas.

This is an uncharacterized protein from Homo sapiens (Human).